The following is a 92-amino-acid chain: Large ribosomal subunit protein bL28 (92 aa).

The protein belongs to the bacterial ribosomal protein bL28 family.

This chain is Large ribosomal subunit protein bL28, found in Borrelia hermsii (strain HS1 / DAH).